The sequence spans 195 residues: MQSIKLVVVGDGAVGKTCLLISYTSNSFPTEYVPTVFDNYSANVMVDNKTVSLGLWDTAGQEDYDRLRPLSYPQTDVFLICFAIISQTSYTNVKSKWWPEVTHHCPNCTIILVGTKCDLREDKESLEKLREKHQQPLTFQQGEQMAKEIKAFCYMECSALTQKGLKQVFDEAIKAVIFPDRDKATNKKNSKCSIL.

A GTP-binding site is contributed by 10-17; it reads GDGAVGKT. The Effector region signature appears at 32–40; the sequence is YVPTVFDNY. Residues 57–61 and 115–118 each bind GTP; these read DTAGQ and TKCD. The residue at position 192 (Cys192) is a Cysteine methyl ester. The S-geranylgeranyl cysteine moiety is linked to residue Cys192. Positions 193-195 are cleaved as a propeptide — removed in mature form; the sequence is SIL.

The protein belongs to the small GTPase superfamily. Rho family. Interacts with pakB.

Its subcellular location is the cell membrane. The polypeptide is Rho-related protein racB (racB) (Dictyostelium discoideum (Social amoeba)).